The following is a 292-amino-acid chain: Glycine--tRNA ligase alpha subunit (292 aa).

This sequence belongs to the class-II aminoacyl-tRNA synthetase family. Tetramer of two alpha and two beta subunits.

It is found in the cytoplasm. It catalyses the reaction tRNA(Gly) + glycine + ATP = glycyl-tRNA(Gly) + AMP + diphosphate. This Synechococcus elongatus (strain ATCC 33912 / PCC 7942 / FACHB-805) (Anacystis nidulans R2) protein is Glycine--tRNA ligase alpha subunit.